The following is a 327-amino-acid chain: Expansin-B7 (327 aa).

Residues 1-30 (MAGRSRRRSFWSVGVAAALLCLLAAHGCSA) form the signal peptide. Residues 30 to 88 (AKHHKPKPTPGGISGNASSSSSNSSTPSIPPPVAPTPTAPTPPIPSPGTGSSNGSSGGG) form a disordered region. Residues 44-56 (GNASSSSSNSSTP) show a composition bias toward low complexity. N-linked (GlcNAc...) asparagine glycosylation is found at N45 and N52. Residues 57-75 (SIPPPVAPTPTAPTPPIPS) are compositionally biased toward pro residues. N82 carries N-linked (GlcNAc...) asparagine glycosylation. The Expansin-like EG45 domain maps to 112–218 (GGACGFKNVN…RRVPCQYPGL (107 aa)). 3 disulfides stabilise this stretch: C115/C143, C146/C213, and C151/C157. The 92-residue stretch at 231 to 322 (VYMAILVEYE…DWQPNTVYSS (92 aa)) folds into the Expansin-like CBD domain. N-linked (GlcNAc...) asparagine glycosylation is present at N298.

It belongs to the expansin family. Expansin B subfamily.

The protein resides in the secreted. It localises to the cell wall. Its subcellular location is the membrane. In terms of biological role, may cause loosening and extension of plant cell walls by disrupting non-covalent bonding between cellulose microfibrils and matrix glucans. No enzymatic activity has been found. May be required for rapid internodal elongation in deepwater rice during submergence. The chain is Expansin-B7 (EXPB7) from Oryza sativa subsp. japonica (Rice).